Consider the following 151-residue polypeptide: MNTTPVPPPETLTPRWYLVDAANQRLGRLAVVVAKLLRGKHKPNFTPHLDTGDYVIVINAEKVVVTGKKRTQKLYRRHSGRPGGMKVETFAQLQARLPERVIEKAVKGMLPHTRLGRRQFTKLKVYAGPHHPHEAQQPQVYPIHTIPGAKV.

The protein belongs to the universal ribosomal protein uL13 family. Part of the 50S ribosomal subunit.

Functionally, this protein is one of the early assembly proteins of the 50S ribosomal subunit, although it is not seen to bind rRNA by itself. It is important during the early stages of 50S assembly. The polypeptide is Large ribosomal subunit protein uL13 (Synechococcus sp. (strain JA-3-3Ab) (Cyanobacteria bacterium Yellowstone A-Prime)).